We begin with the raw amino-acid sequence, 200 residues long: Peroxiredoxin (200 aa).

One can recognise a Thioredoxin domain in the interval 6 to 165 (AQIGKPAPEF…TLRLVQAFQH (160 aa)). Cysteine 52 (cysteine sulfenic acid (-SOH) intermediate) is an active-site residue.

This sequence belongs to the peroxiredoxin family. AhpC/Prx1 subfamily. In terms of assembly, homodimer; disulfide-linked, upon oxidation.

The catalysed reaction is a hydroperoxide + [thioredoxin]-dithiol = an alcohol + [thioredoxin]-disulfide + H2O. Its function is as follows. Thiol-specific peroxidase that catalyzes the reduction of hydrogen peroxide and organic hydroperoxides to water and alcohols, respectively. Plays a role in cell protection against oxidative stress by detoxifying peroxides and as sensor of hydrogen peroxide-mediated signaling events. The polypeptide is Peroxiredoxin (Cynops pyrrhogaster (Japanese fire-bellied newt)).